The sequence spans 285 residues: NAD kinase (285 aa).

D68 serves as the catalytic Proton acceptor. NAD(+)-binding positions include 68 to 69, 142 to 143, R153, K170, D172, 183 to 188, and Q242; these read DG, ND, and TAYNLS.

The protein belongs to the NAD kinase family. It depends on a divalent metal cation as a cofactor.

The protein localises to the cytoplasm. It carries out the reaction NAD(+) + ATP = ADP + NADP(+) + H(+). Its function is as follows. Involved in the regulation of the intracellular balance of NAD and NADP, and is a key enzyme in the biosynthesis of NADP. Catalyzes specifically the phosphorylation on 2'-hydroxyl of the adenosine moiety of NAD to yield NADP. This is NAD kinase from Syntrophotalea carbinolica (strain DSM 2380 / NBRC 103641 / GraBd1) (Pelobacter carbinolicus).